The sequence spans 543 residues: Chaperonin GroEL 2 (543 aa).

ATP-binding positions include 29–32 (TLGP), 86–90 (DGTTT), Gly413, 479–481 (NAA), and Asp495.

Belongs to the chaperonin (HSP60) family. In terms of assembly, forms a cylinder of 14 subunits composed of two heptameric rings stacked back-to-back. Interacts with the co-chaperonin GroES.

Its subcellular location is the cytoplasm. It catalyses the reaction ATP + H2O + a folded polypeptide = ADP + phosphate + an unfolded polypeptide.. Functionally, together with its co-chaperonin GroES, plays an essential role in assisting protein folding. The GroEL-GroES system forms a nano-cage that allows encapsulation of the non-native substrate proteins and provides a physical environment optimized to promote and accelerate protein folding. In Prochlorococcus marinus (strain NATL1A), this protein is Chaperonin GroEL 2.